A 249-amino-acid chain; its full sequence is Proteasome subunit alpha type-3 (249 aa).

This sequence belongs to the peptidase T1A family. The 26S proteasome consists of a 20S proteasome core and two 19S regulatory subunits. The 20S proteasome core is composed of 28 subunits that are arranged in four stacked rings, resulting in a barrel-shaped structure. The two end rings are each formed by seven alpha subunits, and the two central rings are each formed by seven beta subunits. The catalytic chamber with the active sites is on the inside of the barrel.

It localises to the cytoplasm. It is found in the nucleus. Functionally, the proteasome is a multicatalytic proteinase complex which is characterized by its ability to cleave peptides with Arg, Phe, Tyr, Leu, and Glu adjacent to the leaving group at neutral or slightly basic pH. The proteasome has an ATP-dependent proteolytic activity. This chain is Proteasome subunit alpha type-3 (PAG1), found in Oryza sativa subsp. japonica (Rice).